The sequence spans 100 residues: uncharacterized protein (100 aa).

Transmembrane regions (helical) follow at residues 30 to 50 (FHIPDFLSFVFPFVASPPLAF) and 69 to 89 (FLLIVFLFFNLFPTFFFLPFF).

It localises to the cytoplasm. The protein resides in the nucleus membrane. This is an uncharacterized protein from Schizosaccharomyces pombe (strain 972 / ATCC 24843) (Fission yeast).